The following is a 450-amino-acid chain: Keratin, type I cytoskeletal 25 (450 aa).

Positions 1–24 (MSLRLPSGSRRASPRPTTGSLRLS) are disordered. Positions 1–78 (MSLRLPSGSR…MNEGGLLSGN (78 aa)) are head. The interval 79-114 (EKVTMQNLNDRLASYLENVRALEEANADLEQKIKGW) is coil 1A. Residues 79 to 394 (EKVTMQNLND…LLIGGDDGAC (316 aa)) enclose the IF rod domain. The linker 1 stretch occupies residues 115 to 136 (YEKFGPGSCRGLDHDYSRYFPI). A coil 1B region spans residues 137–228 (IEDLKNQIIA…KNHKEEMQVL (92 aa)). Positions 229 to 251 (QCAAGGNVNVEMNAAPGVDLTVL) are linker 12. The coil 2 stretch occupies residues 252-390 (LNNMRAEYEA…ETYCLLIGGD (139 aa)). The interval 391–450 (DGACKSGGYKSKDYAAGNMGNQMKDPIKAIVVKKVLEEVDQRSKILTTRLHSLEEKSQSN) is tail. Phosphoserine is present on S442.

The protein belongs to the intermediate filament family. As to quaternary structure, heterodimer of a type I and a type II keratin. Heterodimer with type II keratin KRT5 leading to the formation of keratin intermediate filament (KIF) network. Interacts with KRT6A to form filaments.

The protein resides in the cytoplasm. Functionally, essential for the proper assembly of type I and type II keratin protein complexes and formation of keratin intermediate filaments in the inner root sheath (irs). Plays a role in the cytoskeleton organization. In Capra hircus (Goat), this protein is Keratin, type I cytoskeletal 25.